Reading from the N-terminus, the 233-residue chain is Segregation and condensation protein A (233 aa).

Belongs to the ScpA family. Component of a cohesin-like complex composed of ScpA, ScpB and the Smc homodimer, in which ScpA and ScpB bind to the head domain of Smc. The presence of the three proteins is required for the association of the complex with DNA.

Its subcellular location is the cytoplasm. Participates in chromosomal partition during cell division. May act via the formation of a condensin-like complex containing Smc and ScpB that pull DNA away from mid-cell into both cell halves. This Streptococcus pyogenes serotype M1 protein is Segregation and condensation protein A.